Here is a 656-residue protein sequence, read N- to C-terminus: Receptor-type tyrosine-protein phosphatase R (656 aa).

The first 23 residues, 1 to 23, serve as a signal peptide directing secretion; sequence MRRAVGFPALCLLLNLHAAGCFS. Residue Ser23 is glycosylated (O-linked (Xyl...) (chondroitin sulfate) serine). Residues 25-225 lie on the Extracellular side of the membrane; sequence NNDHFLAIRQ…HEADKIWSKE (201 aa). N-linked (GlcNAc...) asparagine glycosylation is present at Asn128. Residues 226 to 248 form a helical membrane-spanning segment; it reads GFYAVVIFLSIFIIIVTCLMIIY. At 249 to 656 the chain is on the cytoplasmic side; it reads RLKERLQLSF…ESRLSPETVQ (408 aa). Position 271 is a phosphoserine (Ser271). Ser338 is subject to Phosphoserine; by PKA. One can recognise a Tyrosine-protein phosphatase domain in the interval 392 to 646; the sequence is LQSEFMEIPM…EFVHHALCLF (255 aa). Substrate contacts are provided by residues Asp553, 587–593, and Gln631; that span reads CSAGIGR. The active-site Phosphocysteine intermediate is Cys587.

This sequence belongs to the protein-tyrosine phosphatase family. Receptor class 7 subfamily. In terms of assembly, interacts with MAPKs. As to expression, widely expressed in the brain, most abundant in cerebellum, midbrain, cerebral cortex and hippocampus. Also expressed in heart and skeletal muscle.

Its subcellular location is the cytoplasm. The protein resides in the cell membrane. It carries out the reaction O-phospho-L-tyrosyl-[protein] + H2O = L-tyrosyl-[protein] + phosphate. Sequesters mitogen-activated protein kinases (MAPKs) such as MAPK1, MAPK3 and MAPK14 in the cytoplasm in an inactive form. The MAPKs bind to a dephosphorylated kinase interacting motif, phosphorylation of which by the protein kinase A complex releases the MAPKs for activation and translocation into the nucleus. This chain is Receptor-type tyrosine-protein phosphatase R (Ptprr), found in Rattus norvegicus (Rat).